We begin with the raw amino-acid sequence, 1833 residues long: Proteasome activator complex subunit 4A (1833 aa).

HEAT repeat units follow at residues 460–504 and 983–1022; these read PEGP…LVDC and NFCC…NHSG. The interval 1095–1122 is disordered; sequence SSSPEPNPGAASEQEELEGRKREEQKNK. Over residues 1111–1122 the composition is skewed to basic and acidic residues; the sequence is LEGRKREEQKNK. 4 HEAT repeats span residues 1164–1202, 1344–1382, 1626–1664, and 1670–1708; these read LPLP…QLKR, DAFL…GSKH, SDQI…YNLF, and AKAV…CNFL. Positions 1640–1728 are bromodomain-like (BRDL); sequence SRSSSWHARY…ESLSKTRLPK (89 aa).

It belongs to the BLM10 family. As to quaternary structure, homodimer. Interacts with the 20S and 26S proteasomes.

It localises to the cytoplasm. It is found in the cytosol. Its subcellular location is the nucleus. The protein resides in the nucleus speckle. Functionally, associated component of the proteasome that specifically recognizes acetylated histones and promotes ATP- and ubiquitin-independent degradation of core histones during DNA damage response. Recognizes and binds acetylated histones via its bromodomain-like (BRDL) region and activates the proteasome by opening the gated channel for substrate entry. Binds to the core proteasome via its C-terminus, which occupies the same binding sites as the proteasomal ATPases, opening the closed structure of the proteasome via an active gating mechanism. involved in DNA damage response in somatic cells: binds to acetylated histones and promotes degradation of histones. This is Proteasome activator complex subunit 4A (psme4a) from Danio rerio (Zebrafish).